Consider the following 515-residue polypeptide: Maturase K (515 aa).

Belongs to the intron maturase 2 family. MatK subfamily.

The protein localises to the plastid. It localises to the chloroplast. In terms of biological role, usually encoded in the trnK tRNA gene intron. Probably assists in splicing its own and other chloroplast group II introns. This chain is Maturase K, found in Pinus yunnanensis (Yunnan pine).